Here is a 688-residue protein sequence, read N- to C-terminus: MATEIDLLRDQNVKLNDILRQHQIEHIFRDPAMQNSMSKGGRGDTLTNSVNDQSALPPLIAEYEKHLEELNRQLTYYQKHMGEMKLQLETVITENERLHSKLKDAVEKQLEALPFGTGIGNDICADDETVRNLQEQLQIANQEKNWAVQLWQTASQELESVQKLYQEHMTEAQIHVFENRKQKDQLNNFQQLTKKLHVANENIEMTNHHFLKTVTEQNMEIEKLRKQLRQAKLDLRVAVTKVEELTKVTEGLQEQMLKKEEDIMSAQGKEEASDRRVQQLQSSIKQLESRLCIAIQEANVLKTGKTQLEKQIKELQAKCSESENEKYEAISRARDSMQLLEEANIKQNQILLEEKQKEVEREKMKKTISHLIQDAAIKARKEVESTKKQYEVLILQLKEELSALQMDCDEKQGQIDRAIRGKRAVEEELEKIYREGKQDEGDYRKLEEMHQRCLAAERSKDDLQLRLKTAENRIKQLEINSSEEISRSHEMIQKLQTVLESERENCGFVSEQRLKLQQENEQLQKETEDLRKVALEAQKKAKLKVSTMEHQFSIKEHGFEVQLREMEDSNRNSIVELRHLLAAQQKTANRWKEETKKLTESAEMRISSLKSELSRQKLHTQELLSQLEMANEKVAENEKLILEHQEKANRLQRRLSQAEERAASASQQLSVITVQRRKAASMMNLENI.

Alanine 2 bears the N-acetylalanine mark. Positions 59–673 form a coiled coil; sequence LIAEYEKHLE…SASQQLSVIT (615 aa). Serine 681 carries the phosphoserine modification.

In terms of assembly, interacts with SCN10A and clathrin. Identified in a complex containing SCN10A, clathrin and SCLT1. Detected in small neurons in dorsal root ganglia. Detected in C-type fibers of sciatic nerve (at protein level).

The protein localises to the cytoplasm. Its subcellular location is the cytoskeleton. It is found in the microtubule organizing center. The protein resides in the centrosome. It localises to the centriole. Functionally, adapter protein that links SCN10A to clathrin. Regulates SCN10A channel activity, possibly by promoting channel internalization. The protein is Sodium channel and clathrin linker 1 (Sclt1) of Rattus norvegicus (Rat).